Here is a 227-residue protein sequence, read N- to C-terminus: UPF0758 protein LPC_1989 (227 aa).

The MPN domain maps to 102 to 225 (QLSNTQQTYA…YSIFAENKWV (124 aa)). Zn(2+)-binding residues include His-173, His-175, and Asp-186. The JAMM motif motif lies at 173–186 (HNHPSGLSDASQQD).

It belongs to the UPF0758 family.

The chain is UPF0758 protein LPC_1989 from Legionella pneumophila (strain Corby).